A 224-amino-acid chain; its full sequence is Glutathione S-transferase D7 (224 aa).

The region spanning 2–83 (PNLDLYNFPM…YLVEKYGKPD (82 aa)) is the GST N-terminal domain. Glutathione-binding positions include 53–55 (HTI) and 67–69 (ESR). A GST C-terminal domain is found at 90–210 (DPQKRALINQ…LESLQQGKKF (121 aa)).

The protein belongs to the GST superfamily. Delta family. In terms of assembly, homodimer.

The catalysed reaction is RX + glutathione = an S-substituted glutathione + a halide anion + H(+). Its function is as follows. Conjugation of reduced glutathione to a wide number of exogenous and endogenous hydrophobic electrophiles. May be involved in detoxification. This chain is Glutathione S-transferase D7, found in Drosophila melanogaster (Fruit fly).